The primary structure comprises 474 residues: Aspartyl/glutamyl-tRNA(Asn/Gln) amidotransferase subunit B (474 aa).

It belongs to the GatB/GatE family. GatB subfamily. As to quaternary structure, heterotrimer of A, B and C subunits.

The enzyme catalyses L-glutamyl-tRNA(Gln) + L-glutamine + ATP + H2O = L-glutaminyl-tRNA(Gln) + L-glutamate + ADP + phosphate + H(+). The catalysed reaction is L-aspartyl-tRNA(Asn) + L-glutamine + ATP + H2O = L-asparaginyl-tRNA(Asn) + L-glutamate + ADP + phosphate + 2 H(+). Functionally, allows the formation of correctly charged Asn-tRNA(Asn) or Gln-tRNA(Gln) through the transamidation of misacylated Asp-tRNA(Asn) or Glu-tRNA(Gln) in organisms which lack either or both of asparaginyl-tRNA or glutaminyl-tRNA synthetases. The reaction takes place in the presence of glutamine and ATP through an activated phospho-Asp-tRNA(Asn) or phospho-Glu-tRNA(Gln). In Methanospirillum hungatei JF-1 (strain ATCC 27890 / DSM 864 / NBRC 100397 / JF-1), this protein is Aspartyl/glutamyl-tRNA(Asn/Gln) amidotransferase subunit B.